We begin with the raw amino-acid sequence, 434 residues long: Chaperone SurA (434 aa).

The first 22 residues, Met-1–Ala-22, serve as a signal peptide directing secretion. PpiC domains are found at residues Glu-173–Asp-274 and Val-283–Asp-383.

The protein localises to the periplasm. It catalyses the reaction [protein]-peptidylproline (omega=180) = [protein]-peptidylproline (omega=0). In terms of biological role, chaperone involved in the correct folding and assembly of outer membrane proteins. Recognizes specific patterns of aromatic residues and the orientation of their side chains, which are found more frequently in integral outer membrane proteins. May act in both early periplasmic and late outer membrane-associated steps of protein maturation. This Shewanella denitrificans (strain OS217 / ATCC BAA-1090 / DSM 15013) protein is Chaperone SurA.